Reading from the N-terminus, the 463-residue chain is Maintenance of mitochondrial morphology protein 1-2 (463 aa).

At 1–23 (MVIPAELIQKALKQQSGWGFTEG) the chain is on the lumenal side. The helical transmembrane segment at 24–44 (LVLGQLSVIITVIIILKFVIF) threads the bilayer. At 45 to 463 (AENKSPKKGN…TGADTASGSS (419 aa)) the chain is on the cytoplasmic side. The interval 72–152 (GGQTANGVKT…VAGSTSNLAV (81 aa)) is disordered. Positions 108–122 (RPGSSRVSMVRSTSG) are enriched in polar residues. The 231-residue stretch at 205 to 435 (APESLDWFNV…EPHQMIFILP (231 aa)) folds into the SMP-LTD domain.

Belongs to the MMM1 family. In terms of assembly, homodimer. Component of the ER-mitochondria encounter structure (ERMES) or MDM complex, composed of MMM1, MDM10, MDM12 and MDM34. An MMM1 homodimer associates with one molecule of MDM12 on each side in a pairwise head-to-tail manner, and the SMP-LTD domains of MMM1 and MDM12 generate a continuous hydrophobic tunnel for phospholipid trafficking.

It is found in the endoplasmic reticulum membrane. Component of the ERMES/MDM complex, which serves as a molecular tether to connect the endoplasmic reticulum (ER) and mitochondria. Components of this complex are involved in the control of mitochondrial shape and protein biogenesis, and function in nonvesicular lipid trafficking between the ER and mitochondria. The MDM12-MMM1 subcomplex functions in the major beta-barrel assembly pathway that is responsible for biogenesis of all outer membrane beta-barrel proteins, and acts in a late step after the SAM complex. The MDM10-MDM12-MMM1 subcomplex further acts in the TOM40-specific pathway after the action of the MDM12-MMM1 complex. Essential for establishing and maintaining the structure of mitochondria and maintenance of mtDNA nucleoids. This chain is Maintenance of mitochondrial morphology protein 1-2, found in Yarrowia lipolytica (strain CLIB 122 / E 150) (Yeast).